Consider the following 145-residue polypeptide: AGLTGRKIIIDTYGGWGAHGGGAFSGKDPTKVDRSGAYIVRQAAKSIVASGLARRCIVQVSYAIGVPEPLSVFVDSYGTGKIPDREILQIVKETFDFRPGMISINLDLKRGGNGRFLKTAAYGHFGREDPDFTWEVVKPLKWEKA.

ATP is bound by residues 6-7, A23, K27, and K31; that span reads RK. An L-methionine-binding site is contributed by K31.

The protein belongs to the AdoMet synthase family. As to quaternary structure, homotetramer. Mn(2+) serves as cofactor. Requires Mg(2+) as cofactor. Co(2+) is required as a cofactor. The cofactor is K(+). In terms of tissue distribution, mainly in floral buds and roots.

The protein resides in the cytoplasm. It catalyses the reaction L-methionine + ATP + H2O = S-adenosyl-L-methionine + phosphate + diphosphate. Its pathway is amino-acid biosynthesis; S-adenosyl-L-methionine biosynthesis; S-adenosyl-L-methionine from L-methionine: step 1/1. Catalyzes the formation of S-adenosylmethionine from methionine and ATP. The reaction comprises two steps that are both catalyzed by the same enzyme: formation of S-adenosylmethionine (AdoMet) and triphosphate, and subsequent hydrolysis of the triphosphate. In Petroselinum crispum (Parsley), this protein is S-adenosylmethionine synthase 2 (SMS-2).